Reading from the N-terminus, the 214-residue chain is Octanoyltransferase (214 aa).

The region spanning 29-214 is the BPL/LPL catalytic domain; that stretch reads SETLDEIWVL…QHLQKQLIPS (186 aa). Substrate is bound by residues 69–76, 146–148, and 159–161; these read RGGEITYH, ALG, and GLA. Cys177 functions as the Acyl-thioester intermediate in the catalytic mechanism.

The protein belongs to the LipB family.

The protein resides in the cytoplasm. The enzyme catalyses octanoyl-[ACP] + L-lysyl-[protein] = N(6)-octanoyl-L-lysyl-[protein] + holo-[ACP] + H(+). The protein operates within protein modification; protein lipoylation via endogenous pathway; protein N(6)-(lipoyl)lysine from octanoyl-[acyl-carrier-protein]: step 1/2. In terms of biological role, catalyzes the transfer of endogenously produced octanoic acid from octanoyl-acyl-carrier-protein onto the lipoyl domains of lipoate-dependent enzymes. Lipoyl-ACP can also act as a substrate although octanoyl-ACP is likely to be the physiological substrate. This Polynucleobacter necessarius subsp. necessarius (strain STIR1) protein is Octanoyltransferase.